Reading from the N-terminus, the 390-residue chain is Chorismate synthase 1 (390 aa).

NADP(+)-binding residues include Arg39 and Arg45. The disordered stretch occupies residues 95–117; that stretch reads EQEEKEMKRKVTKPRPGHADLNG. FMN contacts are provided by residues 132–134, 253–254, Gly298, 313–317, and Arg339; these read RSS, NA, and KPIPT.

Belongs to the chorismate synthase family. As to quaternary structure, homotetramer. Requires FMNH2 as cofactor.

The catalysed reaction is 5-O-(1-carboxyvinyl)-3-phosphoshikimate = chorismate + phosphate. Its pathway is metabolic intermediate biosynthesis; chorismate biosynthesis; chorismate from D-erythrose 4-phosphate and phosphoenolpyruvate: step 7/7. In terms of biological role, catalyzes the anti-1,4-elimination of the C-3 phosphate and the C-6 proR hydrogen from 5-enolpyruvylshikimate-3-phosphate (EPSP) to yield chorismate, which is the branch point compound that serves as the starting substrate for the three terminal pathways of aromatic amino acid biosynthesis. This reaction introduces a second double bond into the aromatic ring system. The polypeptide is Chorismate synthase 1 (Bacillus cereus (strain ATCC 14579 / DSM 31 / CCUG 7414 / JCM 2152 / NBRC 15305 / NCIMB 9373 / NCTC 2599 / NRRL B-3711)).